The chain runs to 59 residues: Lantipeptide Flvbeta.f (59 aa).

A propeptide spans Met-1–Ala-27 (cleaved by FlvT). Residues Thr-31 and Thr-32 each carry the 2,3-didehydrobutyrine; by FlvM2 modification. 2 cross-links (beta-methyllanthionine (Thr-Cys); by FlvM2) span residues Thr-41 to Cys-47 and Thr-53 to Cys-56.

Contains DL-beta-methyllanthionine, when coepressed in E.coli with the flavecin synthetase FlvM2.

It is found in the secreted. Lanthionine-containing peptide that does probably not show antibacterial activity, since its analog [+7]Flvbeta.f does not show antibacterial activity against M.luteus. Also does not show antibiotic activity when tested with [Del2]Flvalpha.a, an analog of Flvalpha.a, which is encoded by the same operon than Flvbeta.f. The bactericidal activity of lantibiotics is based on depolarization of energized bacterial cytoplasmic membranes, initiated by the formation of aqueous transmembrane pores. This is Lantipeptide Flvbeta.f from Ruminococcus flavefaciens.